A 188-amino-acid chain; its full sequence is Peptidyl-tRNA hydrolase (188 aa).

Residue Tyr16 participates in tRNA binding. The active-site Proton acceptor is His21. The tRNA site is built by Phe66, Asn68, and Asn114.

The protein belongs to the PTH family. In terms of assembly, monomer.

The protein resides in the cytoplasm. The catalysed reaction is an N-acyl-L-alpha-aminoacyl-tRNA + H2O = an N-acyl-L-amino acid + a tRNA + H(+). Its function is as follows. Hydrolyzes ribosome-free peptidyl-tRNAs (with 1 or more amino acids incorporated), which drop off the ribosome during protein synthesis, or as a result of ribosome stalling. Functionally, catalyzes the release of premature peptidyl moieties from peptidyl-tRNA molecules trapped in stalled 50S ribosomal subunits, and thus maintains levels of free tRNAs and 50S ribosomes. In Geobacter sp. (strain M21), this protein is Peptidyl-tRNA hydrolase.